A 142-amino-acid chain; its full sequence is Transcriptional regulator MraZ (142 aa).

SpoVT-AbrB domains are found at residues 5–47 (NYQH…TNQE) and 76–119 (SLTV…DINA).

This sequence belongs to the MraZ family. As to quaternary structure, forms oligomers.

Its subcellular location is the cytoplasm. The protein localises to the nucleoid. This is Transcriptional regulator MraZ from Mycoplasmoides gallisepticum (strain R(low / passage 15 / clone 2)) (Mycoplasma gallisepticum).